Consider the following 175-residue polypeptide: dATP triphosphohydrolase (175 aa).

DATP is bound at residue Arg19. The Co(2+) site is built by His34, His66, Asp67, Glu70, Asp75, and Asp119.

The protein belongs to the Caudovirales dATP triphosphohydrolase family. As to quaternary structure, homohexamer. It depends on Co(2+) as a cofactor. Requires Zn(2+) as cofactor.

It carries out the reaction dATP + H2O = 2'-deoxyadenosine + triphosphate + H(+). It catalyses the reaction dADP + H2O = 2'-deoxyadenosine + diphosphate. The catalysed reaction is dAMP + H2O = 2'-deoxyadenosine + phosphate. Its function is as follows. Catalyzes the hydrolysis of dATP, dADP and dAMP into dA. This step is essential for Z-genome synthesis (containing aminoadenine instead of adenine). Specifically removes dATP and its precursor dADP from the nucleotide pool of the host, preventing the incorporation of A into the phage genome and favoring the integration of the Z-base into the viral genome. In Cyanophage S-2L (Cyanobacteria phage S-2L), this protein is dATP triphosphohydrolase (datZ).